The primary structure comprises 117 residues: Large ribosomal subunit protein bL20 (117 aa).

It belongs to the bacterial ribosomal protein bL20 family.

Binds directly to 23S ribosomal RNA and is necessary for the in vitro assembly process of the 50S ribosomal subunit. It is not involved in the protein synthesizing functions of that subunit. The polypeptide is Large ribosomal subunit protein bL20 (Vibrio campbellii (strain ATCC BAA-1116)).